Here is a 460-residue protein sequence, read N- to C-terminus: Benzyl alcohol O-benzoyltransferase (460 aa).

Catalysis depends on proton acceptor residues His167 and Asp382.

It belongs to the plant acyltransferase family. As to expression, specifically expressed in flowers, mainly in the limb of flowers corollas, and, at low levels, in roots, stems, sepals and leaves.

It carries out the reaction benzyl alcohol + benzoyl-CoA = benzyl benzoate + CoA. The enzyme catalyses benzyl alcohol + acetyl-CoA = benzyl acetate + CoA. The catalysed reaction is 3-hydroxybenzyl alcohol + acetyl-CoA = 3-hydroxy-benzyl acetate + CoA. It catalyses the reaction 3-hydroxybenzyl alcohol + benzoyl-CoA = 3-hydroxy-benzyl benzoate + CoA. It carries out the reaction 2-phenylethanol + benzoyl-CoA = phenethyl benzoate + CoA. The enzyme catalyses (3Z)-hex-3-en-1-ol + benzoyl-CoA = (3Z)-hex-3-en-1-yl benzoate + CoA. The catalysed reaction is (2E)-geraniol + acetyl-CoA = (2E)-geranyl acetate + CoA. It catalyses the reaction butan-1-ol + benzoyl-CoA = butyl benzoate + CoA. It carries out the reaction (2E)-geraniol + benzoyl-CoA = (2E)-geranyl benzoate + CoA. The enzyme catalyses octan-1-ol + benzoyl-CoA = octyl benzoate + CoA. It participates in aromatic compound metabolism; benzoyl-CoA degradation. Its function is as follows. Involved in the production of volatile organic compounds (VOCs), including floral volatile benzenoids and phenylpropanoids (FVBP), in flowers of fragrant cultivars (e.g. cv. Mitchell and cv. V26), scent attracting pollinators (e.g. the night-active hawkmoth pollinator Manduca sexta). Acyltransferase that catalyzes the transfer of benzoyl and acetyl moieties to a large variety of potential substrate alcohols, and involved in the formation of volatile esters benzyl benzoate and phenylethyl benzoate from benzoyl-CoA. With acetyl-CoA, mainly active on benzyl alcohol, and, to a lower extent, on 3-hydroxybenzyl alcohol, geraniol, and 2-phenylethanol, but barely active on butanol, 1-octanol, 4-hydroxy-benzyl alcohol, 2-hexanol, cis-3-hexen-1-ol and linalool. With benzoyl-CoA, mainly active on benzyl alcohol, but also efficient on several substrates, including 3-hydroxybenzyl alcohol, 2-phenylethanol, geraniol, butanol, cis-3-hexen-1-ol and 1-octanol. The protein is Benzyl alcohol O-benzoyltransferase of Petunia hybrida (Petunia).